A 63-amino-acid polypeptide reads, in one-letter code: Conotoxin Vi5.1b (63 aa).

The first 22 residues, 1-22 (MLCVPVFIILFIIIPFAPTSES), serve as a signal peptide directing secretion. Residues 23-50 (QPKTKEEVAKASVHDNAERTLQRLWNQS) constitute a propeptide that is removed on maturation. The residue at position 62 (P62) is a Proline amide.

The protein belongs to the conotoxin T superfamily. Contains 2 disulfide bonds that can be either 'C1-C3, C2-C4' or 'C1-C4, C2-C3', since these disulfide connectivities have been observed for conotoxins with cysteine framework V (for examples, see AC P0DQQ7 and AC P81755). In terms of tissue distribution, expressed by the venom duct.

The protein resides in the secreted. The chain is Conotoxin Vi5.1b from Conus virgo (Virgin cone).